Here is a 682-residue protein sequence, read N- to C-terminus: Potassium-transporting ATPase ATP-binding subunit (682 aa).

Transmembrane regions (helical) follow at residues 34 to 54, 62 to 82, 219 to 239, and 254 to 274; these read PVMF…IAMA, ALFS…ANFA, IALT…TATL, and VLVA…LSAI. Asp307 acts as the 4-aspartylphosphate intermediate in catalysis. Residues Asp344, Glu348, 377 to 384, and Lys395 contribute to the ATP site; that span reads FTAQSRMS. The Mg(2+) site is built by Asp518 and Asp522. The next 3 membrane-spanning stretches (helical) occupy residues 588–608, 616–636, and 656–676; these read FAII…LNIM, AILS…PLAL, and IYGL…DLLL.

The protein belongs to the cation transport ATPase (P-type) (TC 3.A.3) family. Type IA subfamily. As to quaternary structure, the system is composed of three essential subunits: KdpA, KdpB and KdpC.

The protein resides in the cell inner membrane. The enzyme catalyses K(+)(out) + ATP + H2O = K(+)(in) + ADP + phosphate + H(+). Part of the high-affinity ATP-driven potassium transport (or Kdp) system, which catalyzes the hydrolysis of ATP coupled with the electrogenic transport of potassium into the cytoplasm. This subunit is responsible for energy coupling to the transport system and for the release of the potassium ions to the cytoplasm. This Escherichia coli O139:H28 (strain E24377A / ETEC) protein is Potassium-transporting ATPase ATP-binding subunit.